We begin with the raw amino-acid sequence, 351 residues long: Cyanide hydratase (351 aa).

Positions 6–285 constitute a CN hydrolase domain; that stretch reads YKAAAVTSEP…DGLLFVDIDL (280 aa). Glu-46 (proton acceptor) is an active-site residue. The active site involves Lys-128. Cys-163 acts as the Nucleophile in catalysis.

The protein belongs to the carbon-nitrogen hydrolase superfamily. Nitrilase family. Oligomer of dimers, forming left-handed helical fibers with a diameter of 13 nm but with lengths ranging from approximately 1 um at the leading edge of the peak to having approximately the same length and diameter at the trailing edge.

It catalyses the reaction formamide = hydrogen cyanide + H2O. Catalyzes the hydration of cyanide to formamide. Degradation of cyanide may be important for plant pathogenic fungi in infection of cyanogenic plants. This is Cyanide hydratase from Neurospora crassa (strain ATCC 24698 / 74-OR23-1A / CBS 708.71 / DSM 1257 / FGSC 987).